The following is a 68-amino-acid chain: Large ribosomal subunit protein uL30 (68 aa).

Belongs to the universal ribosomal protein uL30 family. Part of the 50S ribosomal subunit.

The polypeptide is Large ribosomal subunit protein uL30 (Pseudarthrobacter chlorophenolicus (strain ATCC 700700 / DSM 12829 / CIP 107037 / JCM 12360 / KCTC 9906 / NCIMB 13794 / A6) (Arthrobacter chlorophenolicus)).